Reading from the N-terminus, the 538-residue chain is MALPYHIFLFTVLLPSFTLTAPPPCRCMTSSSPYQEFLWRMQRPGNIDAPSYRSFSKGTPTFTAHTHMPRNCYHSATLCMHANTHYWTGKIINPSCPGGLGVTVCWTYFTHTGMSDGGGVQDQAREKHVKEVISQLTRVHSASRPYKGLDLSKLHETLRTHTRLVSLFNTTLTGLHEVSAQNPTNCWICLPLNFRPYVSIPVPEQWNNFSTEINTTSVLVGPLVSNLEITHTSNLTCVKFSNTTDTTNSQCIRWVTPPTQIVCLPSGIFFVCGTSAYRCLNGSSESMCFLSFLVPPMTIYTEQDLYNYVVSKPRNKRVPILPFVIGAGVLGALGTGIGGITTSTQFYYKLSQELNGDMERVADSLVTLQDQLNSLAAVVLQNRRALDLLTAERGGTCLFLGEECCYYVNQSGIVTEKVKEIRDRIQRRAEELRNTGPWGLLSQWMPWILPFLGPLAAIILLLLFGPCIFNLLVNFVSSRIEAVKLQMEPKMQSKTKIYRRPLDRPASPRSDVNDIKGTPPEEILTAQPLLRPNSAGSS.

Residues 1 to 20 (MALPYHIFLFTVLLPSFTLT) form the signal peptide. Residues 21–443 (APPPCRCMTS…NTGPWGLLSQ (423 aa)) are Extracellular-facing. N-linked (GlcNAc...) asparagine glycosylation is present at Asn-169. Positions 186-189 (CWIC) match the CXXC motif. Intrachain disulfides connect Cys-186/Cys-189, Cys-186/Cys-405, and Cys-397/Cys-404. 5 N-linked (GlcNAc...) asparagine glycosylation sites follow: Asn-208, Asn-214, Asn-234, Asn-242, and Asn-281. The tract at residues 320-340 (ILPFVIGAGVLGALGTGIGGI) is fusion peptide. Residues 380-396 (LQNRRALDLLTAERGGT) are immunosuppression. The CX6CC signature appears at 397–405 (CLFLGEECC). A glycan (N-linked (GlcNAc...) asparagine) is linked at Asn-409. Residues 444-464 (WMPWILPFLGPLAAIILLLLF) form a helical membrane-spanning segment. Positions 465-484 (GPCIFNLLVNFVSSRIEAVK) are essential for the fusiogenic function. The Cytoplasmic segment spans residues 465 to 538 (GPCIFNLLVN…LLRPNSAGSS (74 aa)). Residues 496 to 538 (KIYRRPLDRPASPRSDVNDIKGTPPEEILTAQPLLRPNSAGSS) form a disordered region.

This sequence belongs to the gamma type-C retroviral envelope protein family. HERV class-I W env subfamily. As to quaternary structure, the mature envelope protein (Env) consists of a trimer of SU-TM heterodimers attached probably by a labile interchain disulfide bond. Interacts with the C-type lectin CD209/DC-SIGN. Post-translationally, specific enzymatic cleavages in vivo yield mature proteins. Envelope glycoproteins are synthesized as an inactive precursor that is heavily N-glycosylated and processed likely by furin in the Golgi to yield the mature SU and TM proteins. The cleavage site between SU and TM requires the minimal sequence [KR]-X-[KR]-R. The CXXC motif is highly conserved across a broad range of retroviral envelope proteins. It is thought to participate in the formation of a labile disulfide bond possibly with the CX6CC motif present in the transmembrane protein.

The protein localises to the cell membrane. Its subcellular location is the virion. In terms of biological role, this endogenous retroviral envelope protein has retained its original fusogenic properties and participates in trophoblast fusion and the formation of a syncytium during placenta morphogenesis. May recognize and induce fusion through binding of SLC1A4 and SLC1A5. Functionally, endogenous envelope proteins may have kept, lost or modified their original function during evolution. Retroviral envelope proteins mediate receptor recognition and membrane fusion during early infection. The surface protein (SU) mediates receptor recognition, while the transmembrane protein (TM) acts as a class I viral fusion protein. The protein may have at least 3 conformational states: pre-fusion native state, pre-hairpin intermediate state, and post-fusion hairpin state. During viral and target cell membrane fusion, the coiled coil regions (heptad repeats) assume a trimer-of-hairpins structure, positioning the fusion peptide in close proximity to the C-terminal region of the ectodomain. The formation of this structure appears to drive apposition and subsequent fusion of membranes. The polypeptide is Syncytin-1 (ERVW-1) (Pan troglodytes (Chimpanzee)).